The sequence spans 256 residues: tRNA (guanine-N(7)-)-methyltransferase (256 aa).

A compositionally biased stretch (polar residues) spans 1–11 (MHPQDASTEQT). The segment at 1–35 (MHPQDASTEQTPVDDDQVESSQPVHAPEDVAHPRR) is disordered. S-adenosyl-L-methionine is bound by residues Glu-85, Glu-110, Asp-137, and Asp-160. Asp-160 is a catalytic residue. A substrate-binding site is contributed by Lys-164. Residues 166–171 (RHNKRR) are interaction with RNA. Residues Asp-196 and 234-237 (TKFE) contribute to the substrate site.

This sequence belongs to the class I-like SAM-binding methyltransferase superfamily. TrmB family.

It catalyses the reaction guanosine(46) in tRNA + S-adenosyl-L-methionine = N(7)-methylguanosine(46) in tRNA + S-adenosyl-L-homocysteine. It functions in the pathway tRNA modification; N(7)-methylguanine-tRNA biosynthesis. Its function is as follows. Catalyzes the formation of N(7)-methylguanine at position 46 (m7G46) in tRNA. The sequence is that of tRNA (guanine-N(7)-)-methyltransferase from Cupriavidus pinatubonensis (strain JMP 134 / LMG 1197) (Cupriavidus necator (strain JMP 134)).